The primary structure comprises 327 residues: Undecaprenyl-phosphate 4-deoxy-4-formamido-L-arabinose transferase (327 aa).

Transmembrane regions (helical) follow at residues 236 to 256 and 270 to 290; these read LSLVGSVIALSGFTLAVLLVV and VFTLFAVLFMFIGAQFVGMGL.

The protein belongs to the glycosyltransferase 2 family.

It localises to the cell inner membrane. It catalyses the reaction UDP-4-deoxy-4-formamido-beta-L-arabinose + di-trans,octa-cis-undecaprenyl phosphate = 4-deoxy-4-formamido-alpha-L-arabinopyranosyl di-trans,octa-cis-undecaprenyl phosphate + UDP. It participates in glycolipid biosynthesis; 4-amino-4-deoxy-alpha-L-arabinose undecaprenyl phosphate biosynthesis; 4-amino-4-deoxy-alpha-L-arabinose undecaprenyl phosphate from UDP-4-deoxy-4-formamido-beta-L-arabinose and undecaprenyl phosphate: step 1/2. It functions in the pathway bacterial outer membrane biogenesis; lipopolysaccharide biosynthesis. Functionally, catalyzes the transfer of 4-deoxy-4-formamido-L-arabinose from UDP to undecaprenyl phosphate. The modified arabinose is attached to lipid A and is required for resistance to polymyxin and cationic antimicrobial peptides. This chain is Undecaprenyl-phosphate 4-deoxy-4-formamido-L-arabinose transferase, found in Yersinia enterocolitica serotype O:8 / biotype 1B (strain NCTC 13174 / 8081).